Consider the following 316-residue polypeptide: tRNA dimethylallyltransferase (316 aa).

17 to 24 (GPTASGKT) contributes to the ATP binding site. Residue 19–24 (TASGKT) participates in substrate binding. Interaction with substrate tRNA stretches follow at residues 42 to 45 (DSAL), 166 to 170 (QRLSR), 247 to 252 (RCVGYR), and 280 to 287 (KRQITWLR).

This sequence belongs to the IPP transferase family. Monomer. The cofactor is Mg(2+).

The enzyme catalyses adenosine(37) in tRNA + dimethylallyl diphosphate = N(6)-dimethylallyladenosine(37) in tRNA + diphosphate. Functionally, catalyzes the transfer of a dimethylallyl group onto the adenine at position 37 in tRNAs that read codons beginning with uridine, leading to the formation of N6-(dimethylallyl)adenosine (i(6)A). This is tRNA dimethylallyltransferase from Escherichia coli O45:K1 (strain S88 / ExPEC).